The chain runs to 267 residues: Undecaprenyl-diphosphatase (267 aa).

The next 7 membrane-spanning stretches (helical) occupy residues 39 to 59, 87 to 107, 111 to 131, 149 to 169, 189 to 209, 218 to 238, and 244 to 264; these read QGLA…ILYF, WMIA…KDFI, LRSA…LWWV, ALFI…RSGA, FLMS…KLVT, ALSI…HAFL, and VGMM…IAFL.

Belongs to the UppP family.

The protein resides in the cell inner membrane. It carries out the reaction di-trans,octa-cis-undecaprenyl diphosphate + H2O = di-trans,octa-cis-undecaprenyl phosphate + phosphate + H(+). In terms of biological role, catalyzes the dephosphorylation of undecaprenyl diphosphate (UPP). Confers resistance to bacitracin. This is Undecaprenyl-diphosphatase from Photobacterium profundum (strain SS9).